The following is a 239-amino-acid chain: MDYAMKSLSLLYPRSLSRHVAVSTAVVTQQLVSKPSRETPRARPCRVSTADRKVRKGIMAHSLEDLLNKVQDILKLKDKPFSLVLEEDGTIVETEEYFQALAKDTMFMVLLKGQKWKPPSEQRKKRAQLALSQKPTKKIDVARVTFDLYKLNPQDFIGCLNVKATLYDTYSLSYDLHCYKAKRIVKEMLRWTLFSMQATGHMLLGTSSYMQQFLDATEEEQPAKAKPSSLLPACLKMLQ.

The required for liquid-liquid phase separation (LLPS) stretch occupies residues 1 to 35 (MDYAMKSLSLLYPRSLSRHVAVSTAVVTQQLVSKP). The CIDE-N domain occupies 41–118 (RARPCRVSTA…VLLKGQKWKP (78 aa)). An RKKR polybasic motif motif is present at residues 123 to 126 (RKKR).

This sequence belongs to the CIDE family. In terms of assembly, homodimer. Homooligomer; undergoes liquid-liquid phase separation (LLPS) via its N-terminus, facilitating lipid droplet fusion, occurs at the lipid droplet contact sites. Interacts with CIDEA. Interacts with PLIN1. Interacts with NFAT5; this interaction is direct and retains NFAT5 in the cytoplasm. Interacts with CEBPB. Interacts with isoform CLSTN3beta of CLSTN3; inhibiting the lipid transferase activity of CIDEC. Ubiquitinated and targeted to proteasomal degradation, resulting in a short half-life (about 15 minutes in 3T3-L1 cells). Protein stability depends on triaclyglycerol synthesis, fatty acid availability and lipid droplet formation. Expressed almost exclusively in adipose tissue, including subcutaneous and epididymal white adipose tissue (at protein level). Although abundantly present in brown adipose tissue at the mRNA level, the protein is almost undetectable in this tissue, or at moderate levels. Expressed in the mammary gland, in stromal adipose tissue, but becomes undetectable at the end of pregnancy and during lactation (at protein level). Expressed at low levels in skeletal muscle and heart.

It localises to the lipid droplet. Its subcellular location is the endoplasmic reticulum. It is found in the nucleus. The enzyme catalyses a triacyl-sn-glycerol(in) = a triacyl-sn-glycerol(out). Lipid transferase specifically expressed in white adipose tissue, which promotes unilocular lipid droplet formation by mediating lipid droplet fusion. Lipid droplet fusion promotes their enlargement, restricting lipolysis and favoring lipid storage. Localizes on the lipid droplet surface, at focal contact sites between lipid droplets, and mediates atypical lipid droplet fusion by undergoing liquid-liquid phase separation (LLPS) and promoting directional net neutral lipid transfer from the smaller to larger lipid droplets. The transfer direction may be driven by the internal pressure difference between the contacting lipid droplet pair. Its role in neutral lipid transfer and lipid droplet enlargement is activated by the interaction with PLIN1. May also act as a CEBPB coactivator in the white adipose tissue to control the expression of a subset of CEBPB downstream target genes, including SOCS1, SOCS3, TGFB1, TGFBR1, ID2 and XDH. When overexpressed in preadipocytes, induces apoptosis or increases cell susceptibility to apoptosis induced by serum deprivation or TGFB treatment. This is Lipid transferase CIDEC from Mus musculus (Mouse).